A 337-amino-acid polypeptide reads, in one-letter code: Viral cathepsin (337 aa).

Residues 1–19 (MTLLMIFTILLVASSQIEG) form the signal peptide. Residues 20 to 126 (HLKFDIHDAQ…DAPPDVHDEL (107 aa)) constitute a propeptide, activation peptide. 3 disulfides stabilise this stretch: Cys-147-Cys-188, Cys-181-Cys-221, and Cys-276-Cys-324. Cys-150 is a catalytic residue. The N-linked (GlcNAc...) asparagine; by host glycan is linked to Asn-172. Active-site residues include His-283 and Asn-303.

Belongs to the peptidase C1 family. Synthesized as an inactive proenzyme and activated by proteolytic removal of the inhibitory propeptide.

The catalysed reaction is Endopeptidase of broad specificity, hydrolyzing substrates of both cathepsin L and cathepsin B.. Its function is as follows. Cysteine protease that plays an essential role in host liquefaction to facilitate horizontal transmission of the virus. May participate in the degradation of foreign protein expressed by the baculovirus system. This is Viral cathepsin (VCATH) from Adoxophyes honmai (Smaller tea tortrix moth).